We begin with the raw amino-acid sequence, 115 residues long: UPF0102 protein Swol_1475 (115 aa).

This sequence belongs to the UPF0102 family.

This chain is UPF0102 protein Swol_1475, found in Syntrophomonas wolfei subsp. wolfei (strain DSM 2245B / Goettingen).